Consider the following 331-residue polypeptide: UPF0194 membrane protein YbhG (331 aa).

The signal sequence occupies residues 1–19 (MKKPVVIGLAIAAIVTVIA). A coiled-coil region spans residues 107–208 (EEIAQAAAAV…LDLQDTTLIA (102 aa)).

The protein belongs to the UPF0194 family.

The protein localises to the periplasm. The protein is UPF0194 membrane protein YbhG of Salmonella arizonae (strain ATCC BAA-731 / CDC346-86 / RSK2980).